A 485-amino-acid polypeptide reads, in one-letter code: Cobyric acid synthase (485 aa).

Residues 250 to 436 enclose the GATase cobBQ-type domain; sequence RRIVACPILP…IHGLLASPAL (187 aa). Residue cysteine 332 is the Nucleophile of the active site. Histidine 428 is an active-site residue.

The protein belongs to the CobB/CobQ family. CobQ subfamily.

It functions in the pathway cofactor biosynthesis; adenosylcobalamin biosynthesis. In terms of biological role, catalyzes amidations at positions B, D, E, and G on adenosylcobyrinic A,C-diamide. NH(2) groups are provided by glutamine, and one molecule of ATP is hydrogenolyzed for each amidation. This Sphingopyxis alaskensis (strain DSM 13593 / LMG 18877 / RB2256) (Sphingomonas alaskensis) protein is Cobyric acid synthase.